A 179-amino-acid polypeptide reads, in one-letter code: Large ribosomal subunit protein uL5 (179 aa).

It belongs to the universal ribosomal protein uL5 family. Part of the 50S ribosomal subunit; part of the 5S rRNA/L5/L18/L25 subcomplex. Contacts the 5S rRNA and the P site tRNA. Forms a bridge to the 30S subunit in the 70S ribosome.

Its function is as follows. This is one of the proteins that bind and probably mediate the attachment of the 5S RNA into the large ribosomal subunit, where it forms part of the central protuberance. In the 70S ribosome it contacts protein S13 of the 30S subunit (bridge B1b), connecting the 2 subunits; this bridge is implicated in subunit movement. Contacts the P site tRNA; the 5S rRNA and some of its associated proteins might help stabilize positioning of ribosome-bound tRNAs. In Acidovorax ebreus (strain TPSY) (Diaphorobacter sp. (strain TPSY)), this protein is Large ribosomal subunit protein uL5.